The primary structure comprises 557 residues: MASMMQPQIILLKEGTDTSQGKAQLVSNINACTAVGDVVRTTLGPRGMDKLIHDDKGSVTISNDGATIMKLLDIVHPAAKILVDIAKSQDSEVGDGTTTVVLLAAEFLKEAKPFIEDGVHAQNLIRSYRTASTLAIAKVKELAVSIEGKSVEEKKGLLAKCAATTLSSKLIGGEKEFFATMVVDAVMAIGNDDRLNLIGIKKVPGGNMRDSFLVDGVAFKKTFSYAGFEQQPKKFLNPKILLLNIELELKSEKENAEIRLSDPSQYQSIVDAEWNIIYDKLDKCVESGAKVVLSRLAIGDLATQYFADRDIFCAGRVAEEDLNRVAAAAGGTVQTSVNNIIDEVLGTCEIFEEKQVGGERFNIFSGCPSGRTATIVLRGGADQFIEEAERSLHDAIMIVRRAVKNSTVVPGGGAIDMEISKYLRQHSRTIAGKSQLFINSYAKALEVIPRQLCDNAGFDATDVLNKLRQKHAMQSGEGASYGVDINTGGIADSFANFVWEPAVVKINAINAATEAACLILSVDETVKNPKSESAQGDAAGAMGRGRGGGRGRGMRRR.

Residue alanine 2 is modified to N-acetylalanine. Positions proline 529–arginine 557 are disordered. Residues glycine 547–arginine 557 are compositionally biased toward basic residues.

The protein belongs to the TCP-1 chaperonin family. Heterooligomeric complex of about 850 to 900 kDa that forms two stacked rings, 12 to 16 nm in diameter. Interacts with KNAT1.

Its subcellular location is the cytoplasm. Molecular chaperone; assists the folding of proteins upon ATP hydrolysis. Known to play a role, in vitro, in the folding of actin and tubulin. In Arabidopsis thaliana (Mouse-ear cress), this protein is T-complex protein 1 subunit eta.